A 62-amino-acid chain; its full sequence is Insect toxin BsIT4 (62 aa).

Residues 1–62 (DGYIKGNKGC…WLYAATNTCG (62 aa)) enclose the LCN-type CS-alpha/beta domain. 4 disulfides stabilise this stretch: Cys-10/Cys-61, Cys-14/Cys-35, Cys-21/Cys-42, and Cys-25/Cys-44.

The protein belongs to the long (4 C-C) scorpion toxin superfamily. Sodium channel inhibitor family. Beta subfamily. Expressed by the venom gland.

The protein localises to the secreted. Depressant insect beta-toxins cause a transient contraction paralysis followed by a slow flaccid paralysis. They bind voltage-independently at site-4 of sodium channels (Nav) and shift the voltage of activation toward more negative potentials thereby affecting sodium channel activation and promoting spontaneous and repetitive firing. This toxin is active only on insects. This Hottentotta tamulus sindicus (Scorpion) protein is Insect toxin BsIT4.